A 200-amino-acid chain; its full sequence is MIINQSEFSVSAVKASQYPEGGLDEIALAGRSNVGKSSFINTLLQRKNLARTSSSPGKTQTLNFYRVDSDQADFYLVDVPGYGYAKVSKKQREEFGEMIQDYLETRAYLKGLILMIDGRHEPTVDDIAMYDYAQYLNLPILLVATKMDKIKKNAFNKTEAAFRKHLNLNKDNVTFLPFSSVTKLNVDQVKDWIQARLYEE.

In terms of domain architecture, EngB-type G spans 22–199 (GLDEIALAGR…KDWIQARLYE (178 aa)). GTP is bound by residues 30–37 (GRSNVGKS), 57–61 (GKTQT), 78–81 (DVPG), 145–148 (TKMD), and 178–180 (FSS). Mg(2+) is bound by residues Ser-37 and Thr-59.

Belongs to the TRAFAC class TrmE-Era-EngA-EngB-Septin-like GTPase superfamily. EngB GTPase family. Requires Mg(2+) as cofactor.

Functionally, necessary for normal cell division and for the maintenance of normal septation. This is Probable GTP-binding protein EngB from Lactobacillus delbrueckii subsp. bulgaricus (strain ATCC 11842 / DSM 20081 / BCRC 10696 / JCM 1002 / NBRC 13953 / NCIMB 11778 / NCTC 12712 / WDCM 00102 / Lb 14).